The following is a 143-amino-acid chain: Nucleoside diphosphate kinase (143 aa).

ATP-binding residues include Lys-11, Phe-59, Arg-87, Thr-93, Arg-104, and Asn-114. Residue His-117 is the Pros-phosphohistidine intermediate of the active site.

The protein belongs to the NDK family. In terms of assembly, homotetramer. Mg(2+) serves as cofactor.

The protein resides in the cytoplasm. It catalyses the reaction a 2'-deoxyribonucleoside 5'-diphosphate + ATP = a 2'-deoxyribonucleoside 5'-triphosphate + ADP. The enzyme catalyses a ribonucleoside 5'-diphosphate + ATP = a ribonucleoside 5'-triphosphate + ADP. Functionally, major role in the synthesis of nucleoside triphosphates other than ATP. The ATP gamma phosphate is transferred to the NDP beta phosphate via a ping-pong mechanism, using a phosphorylated active-site intermediate. In Tolumonas auensis (strain DSM 9187 / NBRC 110442 / TA 4), this protein is Nucleoside diphosphate kinase.